Here is a 357-residue protein sequence, read N- to C-terminus: Metacaspase-3 (357 aa).

Residue His-168 is part of the active site. Positions 183, 199, and 200 each coordinate Ca(2+). Residue Cys-223 is part of the active site. Asp-230 serves as a coordination point for Ca(2+).

The protein belongs to the peptidase C14B family.

The protein resides in the recycling endosome. Its activity is regulated as follows. Activated by Ca(2+). Functionally, cysteine protease that cleaves specifically after arginine or lysine residues. In the bloodstream form, may cleave inactive metacaspase-4 MCA4 prior to MCA4 secretion. This chain is Metacaspase-3, found in Trypanosoma brucei brucei.